The primary structure comprises 259 residues: MATTTTEATKTSSTNGEDQKQSQNLRHQEVGHKSLLQSDDLYQYILETSVYPREPESMKELREVTAKHPWNIMTTSADEGQFLNMLIKLVNAKNTMEIGVYTGYSLLATALALPEDGKILAMDVNRENYELGLPIIEKAGVAHKIDFREGPALPVLDEIVADEKNHGTYDFIFVDADKDNYINYHKRLIDLVKIGGVIGYDNTLWNGSVVAPPDAPMRKYVRYYRDFVLELNKALAADPRIEICMLPVGDGITICRRIS.

The span at 1-14 (MATTTTEATKTSST) shows a compositional bias: low complexity. The disordered stretch occupies residues 1–29 (MATTTTEATKTSSTNGEDQKQSQNLRHQE). N-acetylalanine is present on Ala-2. Substrate is bound at residue Lys-33. Residues Thr-75, Glu-97, 99-100 (GV), Ser-105, Asp-123, and Ala-152 each bind S-adenosyl-L-methionine. A substrate-binding site is contributed by Asp-175. Residue Asp-175 coordinates a divalent metal cation. Asp-177 provides a ligand contact to S-adenosyl-L-methionine. A divalent metal cation contacts are provided by Asp-201 and Asn-202. Asn-206 is a substrate binding site.

It belongs to the class I-like SAM-binding methyltransferase superfamily. Cation-dependent O-methyltransferase family. CCoAMT subfamily. It depends on a divalent metal cation as a cofactor. As to expression, expressed in stems and roots. Detected in leaves, siliques, flower buds, flowers. Expressed in the tapetum, but not in the endothecium. Detected in the vascular system of leaves and all flower organs, including stigma, stamens, petals and sepals.

The catalysed reaction is (E)-caffeoyl-CoA + S-adenosyl-L-methionine = (E)-feruloyl-CoA + S-adenosyl-L-homocysteine + H(+). The protein operates within aromatic compound metabolism; phenylpropanoid biosynthesis. In terms of biological role, methylates caffeoyl-CoA to feruloyl-CoA. Has a very low activity with caffeic acid and esculetin. Involved in scopoletin biosynthesis in roots. The protein is Caffeoyl-CoA O-methyltransferase 1 (CCOAOMT1) of Arabidopsis thaliana (Mouse-ear cress).